A 284-amino-acid polypeptide reads, in one-letter code: Undecaprenyl-diphosphatase (284 aa).

8 helical membrane passes run Ile7–Leu27, Glu44–His64, Leu90–Asp110, Phe116–Ile136, Val167–Ile187, Phe197–Phe217, Phe229–Phe249, and Phe259–Phe279.

The protein belongs to the UppP family.

The protein localises to the cell membrane. It carries out the reaction di-trans,octa-cis-undecaprenyl diphosphate + H2O = di-trans,octa-cis-undecaprenyl phosphate + phosphate + H(+). Functionally, catalyzes the dephosphorylation of undecaprenyl diphosphate (UPP). Confers resistance to bacitracin. The polypeptide is Undecaprenyl-diphosphatase (Lactococcus lactis subsp. cremoris (strain MG1363)).